Consider the following 72-residue polypeptide: Translation initiation factor IF-1 (72 aa).

The S1-like domain occupies 1 to 72; that stretch reads MAKEEPIEVE…TRGRIIYRTK (72 aa).

It belongs to the IF-1 family. Component of the 30S ribosomal translation pre-initiation complex which assembles on the 30S ribosome in the order IF-2 and IF-3, IF-1 and N-formylmethionyl-tRNA(fMet); mRNA recruitment can occur at any time during PIC assembly.

It localises to the cytoplasm. Functionally, one of the essential components for the initiation of protein synthesis. Stabilizes the binding of IF-2 and IF-3 on the 30S subunit to which N-formylmethionyl-tRNA(fMet) subsequently binds. Helps modulate mRNA selection, yielding the 30S pre-initiation complex (PIC). Upon addition of the 50S ribosomal subunit IF-1, IF-2 and IF-3 are released leaving the mature 70S translation initiation complex. The sequence is that of Translation initiation factor IF-1 from Syntrophus aciditrophicus (strain SB).